The following is a 356-amino-acid chain: Histidinol-phosphate aminotransferase (356 aa).

At K214 the chain carries N6-(pyridoxal phosphate)lysine.

The protein belongs to the class-II pyridoxal-phosphate-dependent aminotransferase family. Histidinol-phosphate aminotransferase subfamily. As to quaternary structure, homodimer. It depends on pyridoxal 5'-phosphate as a cofactor.

It catalyses the reaction L-histidinol phosphate + 2-oxoglutarate = 3-(imidazol-4-yl)-2-oxopropyl phosphate + L-glutamate. The protein operates within amino-acid biosynthesis; L-histidine biosynthesis; L-histidine from 5-phospho-alpha-D-ribose 1-diphosphate: step 7/9. The chain is Histidinol-phosphate aminotransferase from Escherichia coli (strain SMS-3-5 / SECEC).